The following is a 380-amino-acid chain: Queuine tRNA-ribosyltransferase (380 aa).

The active-site Proton acceptor is D96. Substrate contacts are provided by residues 96–100 (DSGGF), D150, Q193, and G220. The segment at 251–257 (GVGAPDS) is RNA binding. D270 (nucleophile) is an active-site residue. The RNA binding; important for wobble base 34 recognition stretch occupies residues 275–279 (TRIAR). 4 residues coordinate Zn(2+): C308, C310, C313, and H339.

This sequence belongs to the queuine tRNA-ribosyltransferase family. In terms of assembly, homodimer. Within each dimer, one monomer is responsible for RNA recognition and catalysis, while the other monomer binds to the replacement base PreQ1. The cofactor is Zn(2+).

The enzyme catalyses 7-aminomethyl-7-carbaguanine + guanosine(34) in tRNA = 7-aminomethyl-7-carbaguanosine(34) in tRNA + guanine. It functions in the pathway tRNA modification; tRNA-queuosine biosynthesis. Functionally, catalyzes the base-exchange of a guanine (G) residue with the queuine precursor 7-aminomethyl-7-deazaguanine (PreQ1) at position 34 (anticodon wobble position) in tRNAs with GU(N) anticodons (tRNA-Asp, -Asn, -His and -Tyr). Catalysis occurs through a double-displacement mechanism. The nucleophile active site attacks the C1' of nucleotide 34 to detach the guanine base from the RNA, forming a covalent enzyme-RNA intermediate. The proton acceptor active site deprotonates the incoming PreQ1, allowing a nucleophilic attack on the C1' of the ribose to form the product. After dissociation, two additional enzymatic reactions on the tRNA convert PreQ1 to queuine (Q), resulting in the hypermodified nucleoside queuosine (7-(((4,5-cis-dihydroxy-2-cyclopenten-1-yl)amino)methyl)-7-deazaguanosine). The chain is Queuine tRNA-ribosyltransferase from Streptococcus suis (strain 98HAH33).